Consider the following 754-residue polypeptide: Bifunctional sesterterpene synthase astC (754 aa).

The N-terminal stretch at 1–24 is a signal peptide; the sequence is MASLEVFVLYLRIFFISFMSRARS. The sesterterpene synthase stretch occupies residues 58 to 388; sequence IQYRHSKLVD…RYHFHKPEHW (331 aa). Aspartate 149 and aspartate 153 together coordinate Mg(2+). The interval 389 to 753 is geranylfarnesyl diphosphate synthase; the sequence is RQVENVDDDG…LRLLLKRLHV (365 aa). Over residues 392–403 the composition is skewed to basic and acidic residues; the sequence is ENVDDDGNKSDD. The segment at 392–414 is disordered; it reads ENVDDDGNKSDDSGIAMKDSPES. Aspartate 512 and aspartate 516 together coordinate Mg(2+).

This sequence in the N-terminal section; belongs to the terpene synthase family. The protein in the C-terminal section; belongs to the FPP/GGPP synthase family. Requires Mg(2+) as cofactor.

The catalysed reaction is (2E,6E,10E,14E)-geranylfarnesyl diphosphate = preasperterpenoid A + diphosphate. It functions in the pathway secondary metabolite biosynthesis; terpenoid biosynthesis. Functionally, bifunctional sesterterpene synthase; part of the gene cluster that mediates the biosynthesis of the asperterpenoids, sesterterpenes that exhibit anti-tuberculosis activity. The first step of the pathway is performed by the sesterterpene synthase astC that possesses both prenyl transferase and terpene cyclase activity, converting isopentenyl diphosphate and dimethylallyl diphosphate into geranylfarnesyl diphosphate (GFPP) and further converting GFPP into preasperterpenoid A, respectively. The cytochrome P450 monooxygenase astB then dually oxidizes preasperterpenoid A to produce asperterpenoid A along with a minor product, asperterpenoid B. Finally, the cytochrome P450 monooxygenase astA converts asperterpenoid A into asperterpenoid C. This chain is Bifunctional sesterterpene synthase astC, found in Talaromyces wortmannii (Penicillium wortmannii).